The sequence spans 348 residues: MNRTDELRTARIESLVTPAELALRYPVTPGVATHVTDSRRRIEKILNGEDKRLLVIIGPCSIHDLTAAMEYATRLQSLRNQYQSRLEIVMRTYFEKPRTVVGWKGLISDPDLNGSYRINHGLELARKLLLQVNELGVPTATEFLDMVTGQFIADLISWGAIGARTTESQIHREMASALSCPVGFKNGTDGNTRIAVDAIRAARASHMFLSPDKNGQMTIYQTSGNPYGHIIMRGGKKPNYHADDIAAACDTLHEFDLPEHLVVDFSHGNCQKQHRRQLEVCEDICQQIRNGSTAIAGIMAESFLREGTQKIVGGQPLTYGQSITDPCLGWEDTERLVEKLASAVDTRF.

It belongs to the class-I DAHP synthase family.

The catalysed reaction is D-erythrose 4-phosphate + phosphoenolpyruvate + H2O = 7-phospho-2-dehydro-3-deoxy-D-arabino-heptonate + phosphate. It functions in the pathway metabolic intermediate biosynthesis; chorismate biosynthesis; chorismate from D-erythrose 4-phosphate and phosphoenolpyruvate: step 1/7. Functionally, stereospecific condensation of phosphoenolpyruvate (PEP) and D-erythrose-4-phosphate (E4P) giving rise to 3-deoxy-D-arabino-heptulosonate-7-phosphate (DAHP). The polypeptide is Phospho-2-dehydro-3-deoxyheptonate aldolase, Trp-sensitive (aroH) (Escherichia coli O157:H7).